A 354-amino-acid chain; its full sequence is Uroporphyrinogen decarboxylase (354 aa).

Substrate is bound by residues 25–29 (RQAGR), Phe-44, Asp-75, Tyr-152, Thr-207, and His-330.

Belongs to the uroporphyrinogen decarboxylase family. Homodimer.

It is found in the cytoplasm. The enzyme catalyses uroporphyrinogen III + 4 H(+) = coproporphyrinogen III + 4 CO2. It functions in the pathway porphyrin-containing compound metabolism; protoporphyrin-IX biosynthesis; coproporphyrinogen-III from 5-aminolevulinate: step 4/4. Functionally, catalyzes the decarboxylation of four acetate groups of uroporphyrinogen-III to yield coproporphyrinogen-III. The polypeptide is Uroporphyrinogen decarboxylase (Xanthomonas axonopodis pv. citri (strain 306)).